We begin with the raw amino-acid sequence, 249 residues long: Segregation and condensation protein A (249 aa).

This sequence belongs to the ScpA family. As to quaternary structure, component of a cohesin-like complex composed of ScpA, ScpB and the Smc homodimer, in which ScpA and ScpB bind to the head domain of Smc. The presence of the three proteins is required for the association of the complex with DNA.

It localises to the cytoplasm. Its function is as follows. Participates in chromosomal partition during cell division. May act via the formation of a condensin-like complex containing Smc and ScpB that pull DNA away from mid-cell into both cell halves. The protein is Segregation and condensation protein A of Oceanobacillus iheyensis (strain DSM 14371 / CIP 107618 / JCM 11309 / KCTC 3954 / HTE831).